We begin with the raw amino-acid sequence, 302 residues long: Phosphoribosylaminoimidazole-succinocarboxamide synthase (302 aa).

It belongs to the SAICAR synthetase family.

The enzyme catalyses 5-amino-1-(5-phospho-D-ribosyl)imidazole-4-carboxylate + L-aspartate + ATP = (2S)-2-[5-amino-1-(5-phospho-beta-D-ribosyl)imidazole-4-carboxamido]succinate + ADP + phosphate + 2 H(+). Its pathway is purine metabolism; IMP biosynthesis via de novo pathway; 5-amino-1-(5-phospho-D-ribosyl)imidazole-4-carboxamide from 5-amino-1-(5-phospho-D-ribosyl)imidazole-4-carboxylate: step 1/2. The protein is Phosphoribosylaminoimidazole-succinocarboxamide synthase of Cupriavidus taiwanensis (strain DSM 17343 / BCRC 17206 / CCUG 44338 / CIP 107171 / LMG 19424 / R1) (Ralstonia taiwanensis (strain LMG 19424)).